The primary structure comprises 448 residues: Trigger factor (448 aa).

The 86-residue stretch at 172–257 (GDRVTVDFVG…MKKVEWPHLP (86 aa)) folds into the PPIase FKBP-type domain.

Belongs to the FKBP-type PPIase family. Tig subfamily.

It localises to the cytoplasm. The enzyme catalyses [protein]-peptidylproline (omega=180) = [protein]-peptidylproline (omega=0). In terms of biological role, involved in protein export. Acts as a chaperone by maintaining the newly synthesized protein in an open conformation. Functions as a peptidyl-prolyl cis-trans isomerase. In Burkholderia multivorans (strain ATCC 17616 / 249), this protein is Trigger factor.